The chain runs to 260 residues: MTSLKLLKEKAPLVICITNDVVKNFTANGLVALGASPAMSEFPADLEDLLKYAGGLLINIGTLTDENWKLYQAALKIAEKYNVPAVLDPVACGAGEYRKKVADDLINNYKLAAIRGNAGEIASLVGIDVASKGVDSAGVDNIDEIALAANEKFNIPIVVTGEVDAIAVNGEVVMIHNGSAMMPKVIGTGCLLGAVVASFIGLEKGQELKSLKTAVLVYNIAGEIAEKRPNGHLPGTFKVEFINALYEITDEDVKEFKRVK.

A substrate-binding site is contributed by Met39. Residues Arg115 and Thr160 each coordinate ATP. Gly187 contributes to the substrate binding site.

Belongs to the Thz kinase family. Requires Mg(2+) as cofactor.

The catalysed reaction is 5-(2-hydroxyethyl)-4-methylthiazole + ATP = 4-methyl-5-(2-phosphooxyethyl)-thiazole + ADP + H(+). The protein operates within cofactor biosynthesis; thiamine diphosphate biosynthesis; 4-methyl-5-(2-phosphoethyl)-thiazole from 5-(2-hydroxyethyl)-4-methylthiazole: step 1/1. Its function is as follows. Catalyzes the phosphorylation of the hydroxyl group of 4-methyl-5-beta-hydroxyethylthiazole (THZ). The chain is Hydroxyethylthiazole kinase 1 from Streptococcus pneumoniae serotype 4 (strain ATCC BAA-334 / TIGR4).